Consider the following 412-residue polypeptide: Peptide chain release factor subunit 1 (412 aa).

The protein belongs to the eukaryotic release factor 1 family. As to quaternary structure, heterodimer of two subunits, one of which binds GTP.

It localises to the cytoplasm. Directs the termination of nascent peptide synthesis (translation) in response to the termination codons UAA, UAG and UGA. The chain is Peptide chain release factor subunit 1 from Methanobrevibacter smithii (strain ATCC 35061 / DSM 861 / OCM 144 / PS).